We begin with the raw amino-acid sequence, 293 residues long: MMRIALFLLTNLGVMVVFGLILSLTGIQSSSVMGLMIMAGLFGFGGAFVSLLMSKWMALRSVGGEVIEQPRNETERWLLDTIAKQSQQAGIAMPQVAIYHAPDINAFATGARRDASLVAVSTGLLQNMSRDEAEAVLAHEVSHIANGDMVTMTLIQGIVNTFVIFISRILAQLAAGFMSGDREEEGNSNGNPMVYFVVSMVLELVFGIVASTITMWFSRHREFHADAGAARLAGSEKMIAALQRLKTSYEPQEASSMMALCINGKSKSISELFMSHPPLDKRIEALRSGQYAR.

Transmembrane regions (helical) follow at residues 4–24 and 32–52; these read IALFLLTNLGVMVVFGLILSL and VMGLMIMAGLFGFGGAFVSLL. Residue histidine 139 participates in Zn(2+) binding. Glutamate 140 is a catalytic residue. A Zn(2+)-binding site is contributed by histidine 143. Helical transmembrane passes span 158–178 and 193–213; these read IVNTFVIFISRILAQLAAGFM and MVYFVVSMVLELVFGIVASTI. Position 222 (glutamate 222) interacts with Zn(2+).

The protein belongs to the peptidase M48B family. Zn(2+) serves as cofactor.

It is found in the cell inner membrane. The chain is Protease HtpX from Erwinia tasmaniensis (strain DSM 17950 / CFBP 7177 / CIP 109463 / NCPPB 4357 / Et1/99).